The sequence spans 896 residues: MDQQMALTWGLCYMALVALCWGHGVTEAEETVPLKTLQCYNDYTNHIICSWADTEDAQGLINMTLYHQLEKKQPVSCELSEELMWSECPSSHRCVPRRCVIPYTRFSITNEDYYSFRPDSDLGIQLMVPLAQNVQPPLPKNVSISSSEDRFLLEWSVSLGDAQVSWLSSKDIEFEVAYKRLQDSWEDAYSLHTSKFQVNFEPKLFLPNSIYAARVRTRLSPGSSLSGRPSRWSPEVHWDSQPGDKAQPQNLQCFFDGIQSLHCSWEVWTQTTGSVSFGLFYRPSPVAPEEKCSPVVKEPPGASVYTRYHCSLPVPEPSAHSQYTVSVKHLEQGKFIMSYNHIQMEPPTLNLTKNRDSYSLHWETQKMAYSFIEHTFQVQYKKKSDSWEDSKTENLDRAHSMDLSQLEPDTSYCARVRVKPISNYDGIWSKWSEEYTWKTDWVMPTLWIVLILVFLILTLLLILRFGCVSVYRTYRKWKEKIPNPSKSLLFQDGGKGLWPPGSMAAFATKNPALQGPQSRLLAEQQGESYAHLEDNNVSPLTIEDPNIIRVPPSGPDTTPAASSESTEQLPNVQVEGPTPNRPRKQLPSFDFNGPYLGPPQSHSLPDLPDQLGSPQVGGSLKPALPGSLEYMCLPPGGQAQLVPLSQVMGQGQAMDVQCGSSLETSGSPSVEPKENPPVELSMEEQEARDNPVTLPISSGGPEGSMMASDYVTPGDPVLTLPTGPLSTSLGPSLGLPSAQSPSLCLKLPRVPSGSPALGPPGFEDYVELPPSVSQAAKSPPGHPAPPVASSPTVIPGEPREEVGPASPHPEGLLVLQQVGDYCFLPGLGPGSLSPHSKPPSPSLCSETEDLVQDLSVKKFPYQPMPQAPAIQFFKSLKHQDYLSLPPWDNSQSGKVC.

The first 22 residues, 1–22 (MDQQMALTWGLCYMALVALCWG), serve as a signal peptide directing secretion. Over 23–441 (HGVTEAEETV…SEEYTWKTDW (419 aa)) the chain is Extracellular. A disulfide bond links Cys-39 and Cys-49. The N-linked (GlcNAc...) asparagine glycan is linked to Asn-62. 2 disulfides stabilise this stretch: Cys-77/Cys-99 and Cys-88/Cys-94. A Fibronectin type-III 1 domain is found at 136-243 (PPLPKNVSIS…PEVHWDSQPG (108 aa)). Asn-141 is a glycosylation site (N-linked (GlcNAc...) asparagine). A compositionally biased stretch (low complexity) spans 220–233 (SPGSSLSGRPSRWS). A disordered region spans residues 220–243 (SPGSSLSGRPSRWSPEVHWDSQPG). Intrachain disulfides connect Cys-253–Cys-263 and Cys-292–Cys-310. A Fibronectin type-III 2 domain is found at 343–439 (QMEPPTLNLT…KWSEEYTWKT (97 aa)). Asn-350 carries an N-linked (GlcNAc...) asparagine glycan. A WSXWS motif motif is present at residues 428-432 (WSKWS). The helical transmembrane segment at 442-463 (VMPTLWIVLILVFLILTLLLIL) threads the bilayer. Topologically, residues 464–896 (RFGCVSVYRT…WDNSQSGKVC (433 aa)) are cytoplasmic. The Box 1 motif motif lies at 477–485 (WKEKIPNPS). Disordered stretches follow at residues 543 to 620 (EDPN…GGSL) and 658 to 725 (CGSS…TGPL). Composition is skewed to polar residues over residues 555–571 (PDTT…QLPN) and 658–668 (CGSSLETSGSP). Positions 716 to 725 (PVLTLPTGPL) are enriched in low complexity. Phosphoserine is present on residues Ser-752 and Ser-754. Phosphotyrosine is present on Tyr-765. Positions 771–810 (SVSQAAKSPPGHPAPPVASSPTVIPGEPREEVGPASPHPE) are disordered.

This sequence belongs to the type I cytokine receptor family. Type 4 subfamily. Heterodimer of an alpha and a beta subunit. The beta subunit is common to the IL3, IL5 and GM-CSF receptors. The signaling GM-CSF receptor complex is a dodecamer of two head-to-head hexamers of two alpha, two beta, and two ligand subunits. Interacts with TMEM102; this interaction occurs preferentially in the absence of CSF2. Interacts with FCER1G; this interaction is direct. Interacts with LYN. May be phosphorylated by LYN.

It is found in the membrane. Functionally, high affinity receptor for interleukin-3, interleukin-5 and granulocyte-macrophage colony-stimulating factor. This is Cytokine receptor common subunit beta (Csf2rb) from Mus musculus (Mouse).